The following is a 164-amino-acid chain: Small ribosomal subunit protein uS5 (164 aa).

One can recognise an S5 DRBM domain in the interval leucine 11–isoleucine 74.

It belongs to the universal ribosomal protein uS5 family. Part of the 30S ribosomal subunit. Contacts proteins S4 and S8.

With S4 and S12 plays an important role in translational accuracy. Its function is as follows. Located at the back of the 30S subunit body where it stabilizes the conformation of the head with respect to the body. The protein is Small ribosomal subunit protein uS5 of Buchnera aphidicola subsp. Cinara cedri (strain Cc).